Reading from the N-terminus, the 270-residue chain is Co-chaperone protein DjlA (270 aa).

The Periplasmic segment spans residues 1–6 (MNWIGK). The chain crosses the membrane as a helical span at residues 7–30 (LIGMMLGFILAGPIGLIIGLFIGH). Topologically, residues 31-270 (VVFDQGRFRQ…EQIRKVRSMV (240 aa)) are cytoplasmic. In terms of domain architecture, J spans 204-270 (DAYKVLGLTS…EQIRKVRSMV (67 aa)).

Homodimer.

The protein localises to the cell inner membrane. Its function is as follows. Regulatory DnaK co-chaperone. Direct interaction between DnaK and DjlA is needed for the induction of the wcaABCDE operon, involved in the synthesis of a colanic acid polysaccharide capsule, possibly through activation of the RcsB/RcsC phosphotransfer signaling pathway. The colanic acid capsule may help the bacterium survive conditions outside the host. In Coxiella burnetii (strain RSA 493 / Nine Mile phase I), this protein is Co-chaperone protein DjlA.